We begin with the raw amino-acid sequence, 348 residues long: MSDRQAALDMALKQIEKQFGKGSIMKLGEKTDTRISTVPSGSLALDTALGIGGYPRGRIIEVYGPESSGKTTVALHAIAEVQQQGGQAAFIDAEHALDPVYAQKLGVNIEELLLSQPDTGEQALEIAEALVRSGAVDIVVVDSVAALVPKAEIEGDMGDSHVGLQARLMSQALRKLSGAINKSKTIAIFINQIREKVGVMFGNPETTPGGRALKFYSSVRLEVRRAEQLKQGNDVMGNKTKIKVVKNKVAPPFRTAEVDIMYGEGISKEGEIIDLGTELDIVQKSGSWYSYEEERLGQGRENAKQFLKENKDIMLMIQEQIREHYGLDNNGVVQQQAEETQEELEFEE.

An ATP-binding site is contributed by 64 to 71 (GPESSGKT).

This sequence belongs to the RecA family. In terms of assembly, monomer; forms higher-order oligomers. Interacts with RecU. Interacts with DprA (smf). Interacts with RecD2.

Its subcellular location is the cytoplasm. It is found in the nucleoid. In terms of biological role, multifunctional protein involved in homologous recombination, DNA repair and competence. Can catalyze the hydrolysis of (d)ATP in the presence of single-stranded (ss)DNA; prefers dATP at least in vitro, catalyzes the dATP-dependent uptake of ssDNA by duplex DNA, and the dATP-dependent hybridization of homologous ssDNA (strand exchange). RecA-ATP cannot catalyze homologous DNA strand exchange; SsbA and DprA activate strand exchange by RecA-ATP. It interacts with LexA causing its activation and leading to its autocatalytic cleavage. Hydrolysis of ATP in the presence of ssDNA is partially inhibited by RecU. Required for DNA transformation; protects transforming DNA from degradation, possibly in combination with DprA. Blocks replication of both leading and lagging strand DNA in the presence of RecO and SsbA; RecD2 is able to overcome this blockage. Functionally, recruited to repair centers (RCs), foci that are the site of double-stranded DNA break(s), after RecN. Concomitant with the appearance of RecO at the RCs, RecA forms threads that extend from RCs toward the opposite cell half, possibly searching for sequence homology along the sister chromosome. The threads disappear after about 2 hours. Thread formation is absolutely dependent on RecJ or AadAB. Thread formation is also dependent on RarA. In Bacillus subtilis (strain 168), this protein is Protein RecA.